Reading from the N-terminus, the 333-residue chain is 2-haloacrylate reductase (333 aa).

153 to 159 contributes to the NADP(+) binding site; sequence AAAGGMG.

This sequence belongs to the zinc-containing alcohol dehydrogenase family.

The enzyme catalyses (S)-2-chloropropanoate + NADP(+) = 2-chloroacrylate + NADPH + H(+). In terms of biological role, involved in the degradation of unsaturated organohalogen compounds. Catalyzes the NADPH-dependent reduction of the carbon-carbon double bond of 2-chloroacrylate to produce (S)-2-chloropropionate, which is probably further metabolized to (R)-lactate by (S)-2-haloacid dehalogenase. Can also use 2-bromoacrylate as substrate. Does not act on acrylate, methacrylate, 1,4-benzoquinone and 1,4-naphthoquinone. The protein is 2-haloacrylate reductase of Burkholderia sp.